The chain runs to 449 residues: Phosphoglucosamine mutase (449 aa).

Serine 100 serves as the catalytic Phosphoserine intermediate. Residues serine 100, aspartate 241, aspartate 243, and aspartate 245 each contribute to the Mg(2+) site. A Phosphoserine modification is found at serine 100.

It belongs to the phosphohexose mutase family. Mg(2+) is required as a cofactor. In terms of processing, activated by phosphorylation.

It catalyses the reaction alpha-D-glucosamine 1-phosphate = D-glucosamine 6-phosphate. Catalyzes the conversion of glucosamine-6-phosphate to glucosamine-1-phosphate. This Clostridium botulinum (strain Kyoto / Type A2) protein is Phosphoglucosamine mutase.